Consider the following 217-residue polypeptide: Adenylate kinase (217 aa).

An ATP-binding site is contributed by Gly11–Thr16. An NMP region spans residues Ser31–Val60. Residues Thr32, Arg37, Asp58–Val60, Gly86–Arg89, and Gln93 contribute to the AMP site. The segment at Ala127–Asp165 is LID. Residue Arg128 coordinates ATP. Zn(2+) contacts are provided by Cys131 and Cys134. Thr137–Tyr138 is a binding site for ATP. Zn(2+) is bound by residues Cys151 and Cys154. The AMP site is built by Arg162 and Arg173. Gln201 contributes to the ATP binding site.

The protein belongs to the adenylate kinase family. Monomer.

It localises to the cytoplasm. The enzyme catalyses AMP + ATP = 2 ADP. It functions in the pathway purine metabolism; AMP biosynthesis via salvage pathway; AMP from ADP: step 1/1. Its function is as follows. Catalyzes the reversible transfer of the terminal phosphate group between ATP and AMP. Plays an important role in cellular energy homeostasis and in adenine nucleotide metabolism. The polypeptide is Adenylate kinase (Lactobacillus gasseri (strain ATCC 33323 / DSM 20243 / BCRC 14619 / CIP 102991 / JCM 1131 / KCTC 3163 / NCIMB 11718 / NCTC 13722 / AM63)).